The following is a 338-amino-acid chain: Nicotinate-nucleotide--dimethylbenzimidazole phosphoribosyltransferase (338 aa).

E305 serves as the catalytic Proton acceptor.

This sequence belongs to the CobT family.

It carries out the reaction 5,6-dimethylbenzimidazole + nicotinate beta-D-ribonucleotide = alpha-ribazole 5'-phosphate + nicotinate + H(+). It functions in the pathway nucleoside biosynthesis; alpha-ribazole biosynthesis; alpha-ribazole from 5,6-dimethylbenzimidazole: step 1/2. Its function is as follows. Catalyzes the synthesis of alpha-ribazole-5'-phosphate from nicotinate mononucleotide (NAMN) and 5,6-dimethylbenzimidazole (DMB). This chain is Nicotinate-nucleotide--dimethylbenzimidazole phosphoribosyltransferase, found in Rhizobium etli (strain CIAT 652).